The primary structure comprises 186 residues: Adenylate kinase (186 aa).

Position 11 to 16 (11 to 16 (GAGKGT)) interacts with ATP. The NMP stretch occupies residues 31 to 60 (STGDILRAAVKNGTAMGIEAKKYMDAGDLV). AMP-binding positions include T32, R37, 58 to 60 (DLV), 86 to 89 (GFPR), and Q93. The tract at residues 127-137 (GRAIKEGRSDD) is LID. R128 is an ATP binding site. Residues R134 and R145 each coordinate AMP. Residue G173 coordinates ATP.

It belongs to the adenylate kinase family. Monomer.

The protein localises to the cytoplasm. It catalyses the reaction AMP + ATP = 2 ADP. It functions in the pathway purine metabolism; AMP biosynthesis via salvage pathway; AMP from ADP: step 1/1. In terms of biological role, catalyzes the reversible transfer of the terminal phosphate group between ATP and AMP. Plays an important role in cellular energy homeostasis and in adenine nucleotide metabolism. This chain is Adenylate kinase, found in Leptospira biflexa serovar Patoc (strain Patoc 1 / Ames).